Reading from the N-terminus, the 474-residue chain is tRNA modification GTPase MnmE (474 aa).

Positions 23, 86, and 125 each coordinate (6S)-5-formyl-5,6,7,8-tetrahydrofolate. One can recognise a TrmE-type G domain in the interval 221–396 (GIPVAIVGEP…LKEKLLEYVN (176 aa)). Asparagine 231 is a K(+) binding site. GTP-binding positions include 231-236 (NVGKST), 250-256 (SEIAGTT), and 275-278 (DTAG). Residue serine 235 participates in Mg(2+) binding. Residues serine 250, isoleucine 252, and threonine 255 each coordinate K(+). Position 256 (threonine 256) interacts with Mg(2+). Lysine 474 is a binding site for (6S)-5-formyl-5,6,7,8-tetrahydrofolate.

This sequence belongs to the TRAFAC class TrmE-Era-EngA-EngB-Septin-like GTPase superfamily. TrmE GTPase family. In terms of assembly, homodimer. Heterotetramer of two MnmE and two MnmG subunits. It depends on K(+) as a cofactor.

The protein localises to the cytoplasm. Exhibits a very high intrinsic GTPase hydrolysis rate. Involved in the addition of a carboxymethylaminomethyl (cmnm) group at the wobble position (U34) of certain tRNAs, forming tRNA-cmnm(5)s(2)U34. This chain is tRNA modification GTPase MnmE, found in Christiangramia forsetii (strain DSM 17595 / CGMCC 1.15422 / KT0803) (Gramella forsetii).